A 296-amino-acid polypeptide reads, in one-letter code: Cadherin-4 (296 aa).

Cadherin domains lie at 1–101 (NVPE…RPEF), 102–216 (INQV…PPEF), and 217–296 (TTST…MLTI). At 1-296 (NVPENSRGPF…ELNRAFMLTI (296 aa)) the chain is on the extracellular side. Residues Asn107 and Asn236 are each glycosylated (N-linked (GlcNAc...) asparagine).

It localises to the cell membrane. In terms of biological role, cadherins are calcium-dependent cell adhesion proteins. They preferentially interact with themselves in a homophilic manner in connecting cells; cadherins may thus contribute to the sorting of heterogeneous cell types. May play an important role in retinal development. In Rattus norvegicus (Rat), this protein is Cadherin-4 (Cdh4).